The sequence spans 153 residues: Lipoprotein signal peptidase (153 aa).

The next 3 membrane-spanning stretches (helical) occupy residues 6–26 (IVAVIVLLLIGLDQLVKSYIV), 60–80 (QQLLFAVITLVVVIGAIWYLH), and 85–105 (DSFWMVLGLTLIIAGGLGNFI). Residues Asp-115 and Asp-131 contribute to the active site. A helical membrane pass occupies residues 124-144 (FAIFNVADSYLTVGVIILLIA).

It belongs to the peptidase A8 family.

The protein localises to the cell membrane. It catalyses the reaction Release of signal peptides from bacterial membrane prolipoproteins. Hydrolyzes -Xaa-Yaa-Zaa-|-(S,diacylglyceryl)Cys-, in which Xaa is hydrophobic (preferably Leu), and Yaa (Ala or Ser) and Zaa (Gly or Ala) have small, neutral side chains.. Its pathway is protein modification; lipoprotein biosynthesis (signal peptide cleavage). Functionally, this protein specifically catalyzes the removal of signal peptides from prolipoproteins. This chain is Lipoprotein signal peptidase, found in Streptococcus pneumoniae (strain ATCC BAA-255 / R6).